The chain runs to 144 residues: uncharacterized protein (144 aa).

Positions 4–111 (VFCAIIAGEA…LPPRNGDKLS (108 aa)) constitute an HIT domain. The short motif at 96 to 100 (HVHLH) is the Histidine triad motif element.

This is an uncharacterized protein from Mycobacterium tuberculosis (strain CDC 1551 / Oshkosh).